A 351-amino-acid chain; its full sequence is Methylthioribose-1-phosphate isomerase (351 aa).

Substrate contacts are provided by residues 51-53, R94, and Q199; that span reads RGA. The active-site Proton donor is D240. Position 250-251 (250-251) interacts with substrate; the sequence is NK.

It belongs to the eIF-2B alpha/beta/delta subunits family. MtnA subfamily. In terms of assembly, homodimer.

The catalysed reaction is 5-(methylsulfanyl)-alpha-D-ribose 1-phosphate = 5-(methylsulfanyl)-D-ribulose 1-phosphate. The protein operates within amino-acid biosynthesis; L-methionine biosynthesis via salvage pathway; L-methionine from S-methyl-5-thio-alpha-D-ribose 1-phosphate: step 1/6. Its function is as follows. Catalyzes the interconversion of methylthioribose-1-phosphate (MTR-1-P) into methylthioribulose-1-phosphate (MTRu-1-P). This Bacillus cereus (strain ATCC 10987 / NRS 248) protein is Methylthioribose-1-phosphate isomerase.